The primary structure comprises 551 residues: RCC1 and BTB domain-containing protein 2 (551 aa).

RCC1 repeat units lie at residues N64 to T115, D117 to S169, G171 to D222, T223 to D274, G276 to S326, and G328 to E382. One can recognise a BTB domain in the interval A394–P457.

Its subcellular location is the cytoplasmic vesicle. The protein localises to the secretory vesicle. It is found in the acrosome. The chain is RCC1 and BTB domain-containing protein 2 (Rcbtb2) from Rattus norvegicus (Rat).